A 476-amino-acid chain; its full sequence is Glycogen synthase (476 aa).

Residue K15 participates in ADP-alpha-D-glucose binding.

It belongs to the glycosyltransferase 1 family. Bacterial/plant glycogen synthase subfamily.

The catalysed reaction is [(1-&gt;4)-alpha-D-glucosyl](n) + ADP-alpha-D-glucose = [(1-&gt;4)-alpha-D-glucosyl](n+1) + ADP + H(+). Its pathway is glycan biosynthesis; glycogen biosynthesis. Functionally, synthesizes alpha-1,4-glucan chains using ADP-glucose. This Yersinia pestis bv. Antiqua (strain Antiqua) protein is Glycogen synthase.